A 376-amino-acid polypeptide reads, in one-letter code: Queuine tRNA-ribosyltransferase (376 aa).

Aspartate 93 (proton acceptor) is an active-site residue. Substrate contacts are provided by residues 93 to 97 (DSGGF), aspartate 147, glutamine 190, and glycine 217. The RNA binding stretch occupies residues 248–254 (GVGKPDD). Aspartate 267 serves as the catalytic Nucleophile. Positions 305, 307, 310, and 336 each coordinate Zn(2+).

This sequence belongs to the queuine tRNA-ribosyltransferase family. Homodimer. Within each dimer, one monomer is responsible for RNA recognition and catalysis, while the other monomer binds to the replacement base PreQ1. Zn(2+) serves as cofactor.

The catalysed reaction is 7-aminomethyl-7-carbaguanine + guanosine(34) in tRNA = 7-aminomethyl-7-carbaguanosine(34) in tRNA + guanine. It participates in tRNA modification; tRNA-queuosine biosynthesis. Catalyzes the base-exchange of a guanine (G) residue with the queuine precursor 7-aminomethyl-7-deazaguanine (PreQ1) at position 34 (anticodon wobble position) in tRNAs with GU(N) anticodons (tRNA-Asp, -Asn, -His and -Tyr). Catalysis occurs through a double-displacement mechanism. The nucleophile active site attacks the C1' of nucleotide 34 to detach the guanine base from the RNA, forming a covalent enzyme-RNA intermediate. The proton acceptor active site deprotonates the incoming PreQ1, allowing a nucleophilic attack on the C1' of the ribose to form the product. After dissociation, two additional enzymatic reactions on the tRNA convert PreQ1 to queuine (Q), resulting in the hypermodified nucleoside queuosine (7-(((4,5-cis-dihydroxy-2-cyclopenten-1-yl)amino)methyl)-7-deazaguanosine). The polypeptide is Queuine tRNA-ribosyltransferase (Jannaschia sp. (strain CCS1)).